A 228-amino-acid polypeptide reads, in one-letter code: Methyltransferase verB (228 aa).

It belongs to the methyltransferase superfamily.

It participates in secondary metabolite biosynthesis; terpenoid biosynthesis. The protein operates within mycotoxin biosynthesis. Functionally, methyltransferase; part of the gene cluster that mediates the biosynthesis of the neurotoxin verrucosidin, a methylated alpha-pyrone polyketide that inhibits oxidative phosphorylation in mitochondria and thereby causes neurological diseases. The carbon backbone of verrucosidin is synthesized by the HR-PKS verA, and further modified by the other verrucodidin cluster enzymes. This is Methyltransferase verB from Penicillium polonicum.